Here is an 823-residue protein sequence, read N- to C-terminus: MKQSRRQFLKNMSAMAATFAMPNFLIAQNAFAQSAENVSEWKITGSHWGAIRAKVQNGKVVDVKPFEYDQYPTEMIKGIKDLIYSEARIRYPMVRLDWLKKRHNSNTAQRGDNRFVRVTWDEALDLFYEELERIQQNYGPWALHTGNVGWRSTGQFHSCGNHMIRAVGMHGNSVSTSGDYSTGAGQVILPYVLGSTEVYSQGTSWEIILKESENIIFWASDPVKNLQVGWNCETHEAYKYLEQLKAKVAAKDVNVICVDPVKSKTQNYLGCDFQYINPQTDVAFMLALAHTLYVENLYDKKFIEMYTVGFEKFLPYLLGESEDKVVKDAEWAAKICAIQAEDIRQFARMLAGKRTQLIFGWAIQRQQHGEQPYWMGTVLAAMLGQIGLAGGGISYAHHYSSIGIPSSGAAMPGAFPLNLDEGQKPKYDNKNYNGYSAVIPCARITDSLLQPGETIDHNGQKITYAPYKMAIFTGCNHWHRHSERNKMKQAFQRLETIVSINYSWTATCRFSDIVLPACTPFERNDIDAYGSYSNRGVIAMQKLVDPLYDSRSDFEIFKDLCRRFGKEKEYCRNMDEMEWVKHLYEACRQENQGKFDMPPFAEFWQKGYVLFPEGEPWVRHADFREDPELHALGTPSGFIEIFSNKIASYGYADCKGHPMWFEKAERSHGGPKSDKYPFWLQSAHPDKRLHSQLCESKALRETYAIQDREPLFINPEDAKRLGIVHGDLVRVYNDRGQAIVGAHVSDNFPQGVLRLQEGAWYSPLDEKVGSIDTYGDPNTMSLDIGSSSLAQAVSANTCLVNIEKFVGQAPAVTGFHGPHEVAL.

The segment at residues 1–32 (MKQSRRQFLKNMSAMAATFAMPNFLIAQNAFA) is a signal peptide (tat-type signal). S181 is a Mo-bis(molybdopterin guanine dinucleotide) binding site.

This sequence belongs to the prokaryotic molybdopterin-containing oxidoreductase family. It depends on Mo-bis(molybdopterin guanine dinucleotide) as a cofactor. In terms of processing, predicted to be exported by the Tat system. The position of the signal peptide cleavage has not been experimentally proven.

The protein resides in the periplasm. The enzyme catalyses trimethylamine + 2 Fe(III)-[cytochrome c] + H2O = trimethylamine N-oxide + 2 Fe(II)-[cytochrome c] + 3 H(+). Functionally, reduces trimethylamine-N-oxide (TMAO) into trimethylamine; an anaerobic reaction coupled to energy-yielding reactions. The chain is Trimethylamine-N-oxide reductase (torA) from Pasteurella multocida (strain Pm70).